A 29-amino-acid polypeptide reads, in one-letter code: Dermaseptin-J9 (29 aa).

As to expression, expressed by the skin glands.

The protein localises to the secreted. Functionally, has antimicrobial activity. The polypeptide is Dermaseptin-J9 (Phasmahyla jandaia (Jandaia leaf frog)).